The primary structure comprises 63 residues: Cytochrome c oxidase subunit 5C (63 aa).

Residues 16-34 (VVKEIFIGLTLGLVAGGMW) form a helical membrane-spanning segment.

It belongs to the cytochrome c oxidase subunit 5C family.

Its subcellular location is the mitochondrion inner membrane. Its function is as follows. This protein is one of the nuclear-coded polypeptide chains of cytochrome c oxidase, the terminal oxidase in mitochondrial electron transport. This chain is Cytochrome c oxidase subunit 5C (COX5C), found in Hordeum vulgare (Barley).